The primary structure comprises 144 residues: Large ribosomal subunit protein uL15 (144 aa).

The interval 1–58 (MQLNDLRSAPGARREKLRPGRGIGSGLGKTGGRGHKGQTSRSGGKIAPGFEGGQQPLH) is disordered. Gly residues predominate over residues 21 to 31 (RGIGSGLGKTG).

It belongs to the universal ribosomal protein uL15 family. As to quaternary structure, part of the 50S ribosomal subunit.

Functionally, binds to the 23S rRNA. The chain is Large ribosomal subunit protein uL15 from Azotobacter vinelandii (strain DJ / ATCC BAA-1303).